The sequence spans 220 residues: Putative tyrosine-protein phosphatase 1 (220 aa).

The 152-residue stretch at 67–218 (FKVPLNAELF…LLARKHVRGQ (152 aa)) folds into the Tyrosine-protein phosphatase domain.

It belongs to the protein-tyrosine phosphatase family. Non-receptor class CDC14 subfamily.

The enzyme catalyses O-phospho-L-tyrosyl-[protein] + H2O = L-tyrosyl-[protein] + phosphate. Could be inactive as the active site cysteine is modified to tryptophan. This Orgyia pseudotsugata multicapsid polyhedrosis virus (OpMNPV) protein is Putative tyrosine-protein phosphatase 1 (PTP-1).